Here is a 543-residue protein sequence, read N- to C-terminus: Thiamine transport system permease protein ThiP (543 aa).

The next 12 membrane-spanning stretches (helical) occupy residues Val19–Leu39, Phe64–Ala84, Leu102–Tyr122, Asp142–Val162, Gly205–Gly225, Ala250–Leu270, Ile300–Ser320, Leu343–Ala363, Gly379–Leu399, Phe406–Val426, Gly468–Phe488, and Phe510–Ala530. The 205-residue stretch at Ala62–Leu266 folds into the ABC transmembrane type-1 1 domain. In terms of domain architecture, ABC transmembrane type-1 2 spans Ile339–Ala530.

This sequence belongs to the binding-protein-dependent transport system permease family. CysTW subfamily. The complex is composed of two ATP-binding proteins (ThiQ), two transmembrane proteins (ThiP) and a solute-binding protein (ThiB).

Its subcellular location is the cell inner membrane. Part of the ABC transporter complex ThiBPQ involved in thiamine import. Probably responsible for the translocation of the substrate across the membrane. This Brucella suis biovar 1 (strain 1330) protein is Thiamine transport system permease protein ThiP (thiP).